A 253-amino-acid polypeptide reads, in one-letter code: Phosphoglycerate mutase 2 (253 aa).

At T3 the chain carries Phosphothreonine. Substrate is bound by residues 10–17, 23–24, R62, 89–92, K100, and 116–117; these read RHGESTWN, CG, ERHY, and RR. H11 functions as the Tele-phosphohistidine intermediate in the catalytic mechanism. S14 is modified (phosphoserine). Residue E89 is the Proton donor/acceptor of the active site. Position 118 is a phosphoserine (S118). Residues Y132 and Y133 each carry the phosphotyrosine modification. A Phosphoserine modification is found at S135. Residue T152 is modified to Phosphothreonine. Residue 187 to 188 participates in substrate binding; it reads GN.

It belongs to the phosphoglycerate mutase family. BPG-dependent PGAM subfamily. Homodimer. Interacts with ENO1. Expressed in the heart and muscle. Not found in the liver and brain.

It carries out the reaction (2R)-2-phosphoglycerate = (2R)-3-phosphoglycerate. It catalyses the reaction (2R)-3-phospho-glyceroyl phosphate = (2R)-2,3-bisphosphoglycerate + H(+). Functionally, interconversion of 3- and 2-phosphoglycerate with 2,3-bisphosphoglycerate as the primer of the reaction. Can also catalyze the reaction of EC 5.4.2.4 (synthase), but with a reduced activity. This is Phosphoglycerate mutase 2 (PGAM2) from Homo sapiens (Human).